The chain runs to 180 residues: Large ribosomal subunit protein uL5 (180 aa).

It belongs to the universal ribosomal protein uL5 family. As to quaternary structure, part of the 50S ribosomal subunit; part of the 5S rRNA/L5/L18/L25 subcomplex. Contacts the 5S rRNA and the P site tRNA. Forms a bridge to the 30S subunit in the 70S ribosome.

Functionally, this is one of the proteins that bind and probably mediate the attachment of the 5S RNA into the large ribosomal subunit, where it forms part of the central protuberance. In the 70S ribosome it contacts protein S13 of the 30S subunit (bridge B1b), connecting the 2 subunits; this bridge is implicated in subunit movement. Contacts the P site tRNA; the 5S rRNA and some of its associated proteins might help stabilize positioning of ribosome-bound tRNAs. The sequence is that of Large ribosomal subunit protein uL5 from Streptococcus suis (strain 05ZYH33).